The primary structure comprises 369 residues: Peptide chain release factor 2 (369 aa).

Residue Q250 is modified to N5-methylglutamine.

The protein belongs to the prokaryotic/mitochondrial release factor family. In terms of processing, methylated by PrmC. Methylation increases the termination efficiency of RF2.

The protein localises to the cytoplasm. Peptide chain release factor 2 directs the termination of translation in response to the peptide chain termination codons UGA and UAA. The polypeptide is Peptide chain release factor 2 (prfB) (Rickettsia typhi (strain ATCC VR-144 / Wilmington)).